The following is a 160-amino-acid chain: uncharacterized protein (160 aa).

Residues Met-1–Ala-33 lie on the Extracellular side of the membrane. Residues Ala-34–Val-54 traverse the membrane as a helical segment. The Cytoplasmic portion of the chain corresponds to Glu-55–Ser-68. Residues Phe-69–Ser-89 form a helical membrane-spanning segment. The Extracellular portion of the chain corresponds to Thr-90–Val-119. The chain crosses the membrane as a helical span at residues Thr-120–Val-140. The Cytoplasmic segment spans residues Lys-141–Leu-160.

The protein resides in the membrane. This is an uncharacterized protein from Saccharomyces cerevisiae (strain ATCC 204508 / S288c) (Baker's yeast).